Here is a 252-residue protein sequence, read N- to C-terminus: MLREVTISRAIIESYYRDLLNNLELDVAIVGAGPSGMVAAYYLAKGGAKVAIFEKKLSIGGGIWGGGMGFNKVVVQEEAREILDEFDIRYEEFEKGYYVADAIEVATTIASKTVKAGVKIFNMIEVEDLVVKDNRVSGIVINWTPVLMTGLHVDPLTVEAKYVIDSTGHGAQVAQFLLKRGLIERIPGEGAMWAEQGERLTVENTREVFPGLYVTGMAANAIAGAPRMGPIFGGMFLSGKKAAQEILEKLNL.

NAD(+) contacts are provided by residues S35, 54–55 (EK), G62, V126, and 152–154 (HVD). Positions 154 and 169 each coordinate Fe cation. M217 lines the NAD(+) pocket. R227 contributes to the glycine binding site.

Belongs to the THI4 family. Homooctamer; tetramer of dimers. The cofactor is Fe(2+).

It catalyses the reaction hydrogen sulfide + glycine + NAD(+) = ADP-5-ethyl-4-methylthiazole-2-carboxylate + nicotinamide + 3 H2O + H(+). It participates in cofactor biosynthesis; thiamine diphosphate biosynthesis. Involved in the biosynthesis of the thiazole moiety of thiamine. Catalyzes the conversion of NAD and glycine to adenosine diphosphate 5-(2-hydroxyethyl)-4-methylthiazole-2-carboxylate (ADT), an adenylated thiazole intermediate, using free sulfide as a source of sulfur. This Pyrococcus abyssi (strain GE5 / Orsay) protein is Thiamine thiazole synthase.